Reading from the N-terminus, the 517-residue chain is Bifunctional purine biosynthesis protein PurH (517 aa).

The region spanning 1–145 (MSPLALVSVS…KNHKDVSVLV (145 aa)) is the MGS-like domain.

This sequence belongs to the PurH family.

The enzyme catalyses (6R)-10-formyltetrahydrofolate + 5-amino-1-(5-phospho-beta-D-ribosyl)imidazole-4-carboxamide = 5-formamido-1-(5-phospho-D-ribosyl)imidazole-4-carboxamide + (6S)-5,6,7,8-tetrahydrofolate. The catalysed reaction is IMP + H2O = 5-formamido-1-(5-phospho-D-ribosyl)imidazole-4-carboxamide. Its pathway is purine metabolism; IMP biosynthesis via de novo pathway; 5-formamido-1-(5-phospho-D-ribosyl)imidazole-4-carboxamide from 5-amino-1-(5-phospho-D-ribosyl)imidazole-4-carboxamide (10-formyl THF route): step 1/1. It participates in purine metabolism; IMP biosynthesis via de novo pathway; IMP from 5-formamido-1-(5-phospho-D-ribosyl)imidazole-4-carboxamide: step 1/1. This Prochlorococcus marinus (strain MIT 9301) protein is Bifunctional purine biosynthesis protein PurH.